The following is a 413-amino-acid chain: Putative zinc finger protein B0310.2 (413 aa).

2 disordered regions span residues 130-151 (PIFS…KRSL) and 259-290 (VESD…TGPM). The span at 270-281 (PSPSTGDITENE) shows a compositional bias: polar residues. C2H2-type zinc fingers lie at residues 306 to 330 (FICM…MFIH) and 336 to 358 (HTCP…KKTH).

The protein resides in the nucleus. The sequence is that of Putative zinc finger protein B0310.2 from Caenorhabditis elegans.